The primary structure comprises 343 residues: Shematrin-like protein 3 (343 aa).

The N-terminal stretch at 1-16 is a signal peptide; sequence MLKLVCAVVLIATVNA.

As to expression, prismatic layer of shell (at protein level).

The protein localises to the secreted. This is Shematrin-like protein 3 from Pinctada maxima (Silver-lipped pearl oyster).